Consider the following 700-residue polypeptide: Neoverrucotoxin subunit beta (700 aa).

Positions 506 to 700 constitute a B30.2/SPRY domain; the sequence is HMPGVETIKD…QKVNGQIKLL (195 aa).

Belongs to the SNTX/VTX toxin family. In terms of assembly, heterodimer of alpha and beta subunits. Not glycosylated. In terms of processing, four intrachain disulfide linkages are present in the heterodimer. No interchain disulfide bound links the two subunits. In terms of tissue distribution, expressed by the venom gland.

Its subcellular location is the secreted. Has hemolytic and lethal activities. Its hemolytic activity is inhibited by anionic lipids, especially potently by cardiolipin. This chain is Neoverrucotoxin subunit beta, found in Synanceia verrucosa (Reef stonefish).